Reading from the N-terminus, the 302-residue chain is Nucleotide-binding protein STH186 (302 aa).

15–22 (GMSGAGKT) contributes to the ATP binding site. 66-69 (DIRG) is a binding site for GTP.

This sequence belongs to the RapZ-like family.

In terms of biological role, displays ATPase and GTPase activities. The protein is Nucleotide-binding protein STH186 of Symbiobacterium thermophilum (strain DSM 24528 / JCM 14929 / IAM 14863 / T).